The chain runs to 989 residues: Translation initiation factor IF-2 (989 aa).

2 disordered regions span residues 43-219 and 234-379; these read KRRR…LQAR and EARR…GGAR. Residues 72-87 are compositionally biased toward polar residues; sequence NTPNKDTAVTQTATKN. Residues 105-146 show a composition bias toward low complexity; sequence PKPVAAEATAQETSKAAPAAAQPVAEKEAAAPASAEAAKSAA. Positions 149 to 159 are enriched in basic and acidic residues; the sequence is VTDRGAKKTTE. The segment covering 160-171 has biased composition (polar residues); it reads KNGANASGNRPS. Basic and acidic residues predominate over residues 234-293; the sequence is EARRREDRLKQEADLEEQRRIEEKRRLEAEAKVEAEKQAALKEKEKAEAKARAKAEKEAK. A compositionally biased stretch (low complexity) spans 294–303; the sequence is AAQAKTAGAA. Basic and acidic residues predominate over residues 342–361; it reads PRREAPRPAMRDRKGEDRRQ. Residues 489–659 form the tr-type G domain; that stretch reads SRPPVVTIMG…LLQAEMLELK (171 aa). The tract at residues 498–505 is G1; the sequence is GHVDHGKT. A GTP-binding site is contributed by 498–505; that stretch reads GHVDHGKT. Residues 523 to 527 form a G2 region; it reads GITQH. The interval 545-548 is G3; it reads DTPG. GTP contacts are provided by residues 545–549 and 599–602; these read DTPGH and NKMD. A G4 region spans residues 599–602; it reads NKMD. Residues 635-637 form a G5 region; the sequence is SAA.

It belongs to the TRAFAC class translation factor GTPase superfamily. Classic translation factor GTPase family. IF-2 subfamily.

It is found in the cytoplasm. In terms of biological role, one of the essential components for the initiation of protein synthesis. Protects formylmethionyl-tRNA from spontaneous hydrolysis and promotes its binding to the 30S ribosomal subunits. Also involved in the hydrolysis of GTP during the formation of the 70S ribosomal complex. This Zymomonas mobilis subsp. mobilis (strain ATCC 31821 / ZM4 / CP4) protein is Translation initiation factor IF-2.